Consider the following 92-residue polypeptide: Small ribosomal subunit protein uS19c (92 aa).

It belongs to the universal ribosomal protein uS19 family.

Its subcellular location is the plastid. The protein resides in the chloroplast. In terms of biological role, protein S19 forms a complex with S13 that binds strongly to the 16S ribosomal RNA. In Trieres chinensis (Marine centric diatom), this protein is Small ribosomal subunit protein uS19c (rps19).